The chain runs to 324 residues: Alkanal monooxygenase beta chain (324 aa).

Belongs to the bacterial luciferase oxidoreductase family. Heterodimer of an alpha and a beta chain.

It carries out the reaction a long-chain fatty aldehyde + FMNH2 + O2 = a long-chain fatty acid + hnu + FMN + H2O + 2 H(+). Light-emitting reaction in luminous bacteria. The specific role of the beta subunit is unknown, but it is absolutely required for bioluminescence activity. In Vibrio harveyi (Beneckea harveyi), this protein is Alkanal monooxygenase beta chain (luxB).